Here is a 159-residue protein sequence, read N- to C-terminus: Deoxyuridine 5'-triphosphate nucleotidohydrolase (159 aa).

Residues S79, G92, D95, Y98, K103, R148, F153, and G154 each contribute to the dUMP site.

It belongs to the dUTPase family. As to quaternary structure, homotrimer. The cofactor is Mg(2+).

The enzyme catalyses dUTP + H2O = dUMP + diphosphate + H(+). It participates in pyrimidine metabolism; dUMP biosynthesis; dUMP from dCTP (dUTP route): step 2/2. Functionally, involved in nucleotide metabolism via production of dUMP, the immediate precursor of thymidine nucleotides, and decreases the intracellular concentration of dUTP so that uracil cannot be incorporated into DNA. This chain is Deoxyuridine 5'-triphosphate nucleotidohydrolase (DUT1), found in Candida albicans (strain SC5314 / ATCC MYA-2876) (Yeast).